Reading from the N-terminus, the 75-residue chain is Large ribosomal subunit protein bL31 (75 aa).

Positions 16, 18, 38, and 41 each coordinate Zn(2+).

This sequence belongs to the bacterial ribosomal protein bL31 family. Type A subfamily. Part of the 50S ribosomal subunit. It depends on Zn(2+) as a cofactor.

Its function is as follows. Binds the 23S rRNA. The sequence is that of Large ribosomal subunit protein bL31 from Nocardioides sp. (strain ATCC BAA-499 / JS614).